Here is a 257-residue protein sequence, read N- to C-terminus: Thiazole synthase (257 aa).

Lysine 100 (schiff-base intermediate with DXP) is an active-site residue. 1-deoxy-D-xylulose 5-phosphate contacts are provided by residues glycine 161, 187-188, and 209-210; these read AG and NT.

It belongs to the ThiG family. In terms of assembly, homotetramer. Forms heterodimers with either ThiH or ThiS.

It is found in the cytoplasm. It carries out the reaction [ThiS sulfur-carrier protein]-C-terminal-Gly-aminoethanethioate + 2-iminoacetate + 1-deoxy-D-xylulose 5-phosphate = [ThiS sulfur-carrier protein]-C-terminal Gly-Gly + 2-[(2R,5Z)-2-carboxy-4-methylthiazol-5(2H)-ylidene]ethyl phosphate + 2 H2O + H(+). The protein operates within cofactor biosynthesis; thiamine diphosphate biosynthesis. Its function is as follows. Catalyzes the rearrangement of 1-deoxy-D-xylulose 5-phosphate (DXP) to produce the thiazole phosphate moiety of thiamine. Sulfur is provided by the thiocarboxylate moiety of the carrier protein ThiS. In vitro, sulfur can be provided by H(2)S. This is Thiazole synthase from Pelagibacter ubique (strain HTCC1062).